The primary structure comprises 1850 residues: Serine/threonine-protein kinase WNK (1850 aa).

Disordered stretches follow at residues 1–108, 221–253, and 272–309; these read MPDS…NALE, QHSIFDRSRLNKIPPNTSLASSSSPSDAANNDK, and MVNDGPRTLTGDDMDKMVSEEERARKEQEKREEEEKAA. Composition is skewed to low complexity over residues 16 to 26 and 234 to 251; these read SSVSSTTASTT and PPNTSLASSSSPSDAANN. Basic and acidic residues predominate over residues 284 to 309; the sequence is DMDKMVSEEERARKEQEKREEEEKAA. One can recognise a Protein kinase domain in the interval 334-596; sequence LKFDEELGRG…VKQLLVDDFF (263 aa). ATP-binding positions include Ser-344, 416–419, and Lys-466; that span reads TELM. Asp-483 (proton acceptor) is an active-site residue. The stretch at 693-749 forms a coiled coil; it reads DHRLLEIKRAKEEEERIREEAEIKEELRLRAEAKEKEKERLEKERLEKKAAAAAAAN. Residues 727–742 show a composition bias toward basic and acidic residues; the sequence is EKEKERLEKERLEKKA. Disordered stretches follow at residues 727–790, 890–943, 1040–1130, 1188–1249, 1588–1636, 1721–1740, and 1769–1850; these read EKEK…AQQP, TPAS…KRKS, EPPT…AAKP, SPVS…TPAI, GTHI…PSHS, ASLSLPASPPPNTEIPDNEG, and IIPS…IENV. A compositionally biased stretch (pro residues) spans 751 to 760; that stretch reads NPTPIPPTPA. Residues 776–790 are compositionally biased toward polar residues; that stretch reads STQTSAEIQQSAQQP. The segment covering 890 to 934 has biased composition (low complexity); the sequence is TPASIASPSPAPSATDVASTTAPVTPAPTPTTTTDGGAAAASTTT. Over residues 1062-1071 the composition is skewed to basic and acidic residues; that stretch reads PKIEIEKTPP. Over residues 1077 to 1101 the composition is skewed to polar residues; the sequence is QEPNNVQVTNVRKVSQESNAESVQS. Positions 1188–1207 are enriched in low complexity; sequence SPVSHSLSSNSSPSATTHSN. The span at 1208-1217 shows a compositional bias: polar residues; that stretch reads MSSIQSTTSV. Positions 1771–1805 are enriched in low complexity; sequence PSSRQSVRSATSSSPSTPPSSSSAPPKSLSSPTKS. Positions 1806 to 1820 are enriched in polar residues; sequence YVSHCSLSIGYGSTA. Over residues 1821–1832 the composition is skewed to low complexity; the sequence is SSEQQQREPSPS.

It belongs to the protein kinase superfamily. Ser/Thr protein kinase family. WNK subfamily. In terms of assembly, interacts with gck-3 (via C-terminus). It depends on Mg(2+) as a cofactor. Expressed in pharynx, nervous system, hypodermis, spermatheca, excretory cell and canal and body wall muscles.

The protein localises to the cytoplasm. The catalysed reaction is L-seryl-[protein] + ATP = O-phospho-L-seryl-[protein] + ADP + H(+). It carries out the reaction L-threonyl-[protein] + ATP = O-phospho-L-threonyl-[protein] + ADP + H(+). Its activity is regulated as follows. Activated in response to hyperosmotic stress: cell shrinkage promotes formation of a membraneless compartment that concentrates wnk-1 with its downstrem substrates. Functionally, serine/threonine-protein kinase component of the WNK3-SPAK/OSR1 kinase cascade, which plays an important role in the regulation of electrolyte homeostasis and regulatory volume increase in response to hyperosmotic stress. Wnk-1 mediates regulatory volume increase in response to hyperosmotic stress by acting as a molecular crowding sensor, which senses cell shrinkage and mediates formation of a membraneless compartment by undergoing liquid-liquid phase separation. The membraneless compartment concentrates wnk-1 with its substrates. Phosphorylates gck-3. Plays a role in osmotic stress responses during which it increases gpdh-1 translation, likely by phosphorylating gck-3. Essential for larval development and the tubular formation of the excretory canals. The protein is Serine/threonine-protein kinase WNK of Caenorhabditis elegans.